Here is a 62-residue protein sequence, read N- to C-terminus: DNA-directed RNA polymerase subunit Rpo10 (62 aa).

Residues Cys-6, Cys-9, Cys-43, and Cys-44 each contribute to the Zn(2+) site.

Belongs to the archaeal Rpo10/eukaryotic RPB10 RNA polymerase subunit family. In terms of assembly, part of the RNA polymerase complex. Requires Zn(2+) as cofactor.

The protein resides in the cytoplasm. The enzyme catalyses RNA(n) + a ribonucleoside 5'-triphosphate = RNA(n+1) + diphosphate. In terms of biological role, DNA-dependent RNA polymerase (RNAP) catalyzes the transcription of DNA into RNA using the four ribonucleoside triphosphates as substrates. This chain is DNA-directed RNA polymerase subunit Rpo10, found in Methanoregula boonei (strain DSM 21154 / JCM 14090 / 6A8).